We begin with the raw amino-acid sequence, 444 residues long: Tol-Pal system protein TolB (444 aa).

The N-terminal stretch at 1–19 (MRNIIYFILLLLFSFKGYA) is a signal peptide.

Belongs to the TolB family. As to quaternary structure, the Tol-Pal system is composed of five core proteins: the inner membrane proteins TolA, TolQ and TolR, the periplasmic protein TolB and the outer membrane protein Pal. They form a network linking the inner and outer membranes and the peptidoglycan layer.

Its subcellular location is the periplasm. In terms of biological role, part of the Tol-Pal system, which plays a role in outer membrane invagination during cell division and is important for maintaining outer membrane integrity. The protein is Tol-Pal system protein TolB of Rickettsia akari (strain Hartford).